The following is a 580-amino-acid chain: Glutathione hydrolase proenzyme (580 aa).

Residues Met-1 to Ala-25 form the signal peptide. Position 114 (Arg-114) interacts with L-glutamate. Thr-391 serves as the catalytic Nucleophile. L-glutamate-binding positions include Thr-409, Asn-411, Gln-430, Asp-433, Ser-462 to Ser-463, and Gly-483 to Gly-484. Positions Asp-561–Tyr-580 are disordered.

This sequence belongs to the gamma-glutamyltransferase family. This enzyme consists of two polypeptide chains, which are synthesized in precursor form from a single polypeptide. In terms of processing, cleaved by autocatalysis into a large and a small subunit.

It localises to the periplasm. The enzyme catalyses an N-terminal (5-L-glutamyl)-[peptide] + an alpha-amino acid = 5-L-glutamyl amino acid + an N-terminal L-alpha-aminoacyl-[peptide]. It carries out the reaction glutathione + H2O = L-cysteinylglycine + L-glutamate. It catalyses the reaction an S-substituted glutathione + H2O = an S-substituted L-cysteinylglycine + L-glutamate. Its pathway is sulfur metabolism; glutathione metabolism. Its activity is regulated as follows. Transferase and hydrolase activities are inhibited by L-Ala and L-Gln, and also by GGT affinity labeling reagents such as azaserine and 6-diazo-5-oxo-nor-leucine. Cleaves the gamma-glutamyl bond of periplasmic glutathione (gamma-Glu-Cys-Gly), glutathione conjugates, and other gamma-glutamyl compounds. The metabolism of glutathione releases free glutamate and the dipeptide cysteinyl-glycine, which is hydrolyzed to cysteine and glycine by dipeptidases; it may function in amino acid uptake/salvage, or possibly in peptidoglycan linkage. Catalyzes the hydrolysis and transpeptidation of many gamma-glutamyl compounds (including some D-gamma-glutamyl substrates), with a preference for basic and aromatic amino acids as acceptors. The KM values for gamma-glutamyl acceptors are so high that it has been proposed transpeptidation is not the physiological role in E.coli. The chain is Glutathione hydrolase proenzyme (ggt) from Escherichia coli (strain K12).